Consider the following 416-residue polypeptide: MKKILERSMEGSGTWQGLVLVGIVTWICASSYLKFTHKFRSLLQPWVARQVVGGVPLILRIQKCQNGVLDAFFSGLSCVVSVPFYTAFLPLLFWSGHGRLARQMTLLIAFCDYLGNCIKDVVSAPRPSCPPVRRITATKDEEDNAMEYGLPSSHTLNTVCLSGYLLHYVLSSLEYESVSIQYYGFALACLLVALIAFGRVYLGMHSVVDIVSGLAIGVLILGLWLTVNEKLDDFITSKQNVSSFWTALSFLLLFAYPTPEHPTPSYEYHTAFNGVTLGIVTGVQQTYSQFHHEAAPRIFSPELPISSYLGRVMVGIPTILLVKFCSKSLAKWTLPMVSNALGIPIRSSMYIPKLKGYASGKKTDEPKNSVGYLQKLCEFLSHDSFDIDTGIRFFQYAGLAWSVVDLVPSLFSYVNL.

Helical transmembrane passes span 72–92 and 104–124; these read FFSG…LPLL and MTLL…VVSA. Residues 119–127 form a phosphatase sequence motif I region; the sequence is KDVVSAPRP. Positions 151–154 are phosphatase sequence motif II; sequence PSSH. H154 acts as the Proton donor in catalysis. A helical membrane pass occupies residues 178 to 198; sequence VSIQYYGFALACLLVALIAFG. A phosphatase sequence motif III region spans residues 198–209; that stretch reads GRVYLGMHSVVD. Residue H205 is the Nucleophile of the active site. 5 helical membrane passes run 207 to 227, 241 to 261, 266 to 286, 302 to 322, and 393 to 413; these read VVDI…WLTV, VSSF…TPEH, YEYH…VQQT, ELPI…ILLV, and FFQY…LFSY.

Belongs to the type 2 lipid phosphate phosphatase family.

It is found in the endoplasmic reticulum membrane. Its function is as follows. Functions as a sphingoid long-chain base phosphate (LCBP) phosphatase. May play a role in the regulation of LCBP levels and be involved in stomatal responses through LCBP-mediated ABA signaling. This Arabidopsis thaliana (Mouse-ear cress) protein is Lipid phosphate phosphatase delta (LPPD).